The sequence spans 167 residues: MLPMITGFMNYGQQTLRAARYIGQGFMITLSHTNRLPVTIQYPYEKLITSERFRGRIHFEFDKCIACEVCVRVCPIDLPVVDWKLETNIRKKRLLNYSIDFGICIFCGNCVEYCPTNCLSMTEEYEFATYDRHELNYNQIALGRLPMSVIDDYTIRTIWNSPQTKNG.

4Fe-4S ferredoxin-type domains lie at 55–84 and 95–124; these read GRIHFEFDKCIACEVCVRVCPIDLPVVDWK and LNYSIDFGICIFCGNCVEYCPTNCLSMTEE. [4Fe-4S] cluster is bound by residues Cys-64, Cys-67, Cys-70, Cys-74, Cys-104, Cys-107, Cys-110, and Cys-114.

It belongs to the complex I 23 kDa subunit family. In terms of assembly, NDH is composed of at least 16 different subunits, 5 of which are encoded in the nucleus. [4Fe-4S] cluster is required as a cofactor.

The protein localises to the plastid. It localises to the chloroplast thylakoid membrane. It carries out the reaction a plastoquinone + NADH + (n+1) H(+)(in) = a plastoquinol + NAD(+) + n H(+)(out). The enzyme catalyses a plastoquinone + NADPH + (n+1) H(+)(in) = a plastoquinol + NADP(+) + n H(+)(out). Functionally, NDH shuttles electrons from NAD(P)H:plastoquinone, via FMN and iron-sulfur (Fe-S) centers, to quinones in the photosynthetic chain and possibly in a chloroplast respiratory chain. The immediate electron acceptor for the enzyme in this species is believed to be plastoquinone. Couples the redox reaction to proton translocation, and thus conserves the redox energy in a proton gradient. The polypeptide is NAD(P)H-quinone oxidoreductase subunit I, chloroplastic (Arabis hirsuta (Hairy rock-cress)).